Reading from the N-terminus, the 2245-residue chain is MTTSTIENGASSPIIVSSSTPKLYQEGAGVWIPDQELGWIGADVIEHSETSADQVLVRTEDDREVKIPLSKVFQKNPDILEGVDDLSFLSHLHEPAILHNLHHRYNLNQIYTYIGKILIAINPYTSLPLYGKEMISAYYGKQLGTLAPHVYAVAEDAFKDMRYDGTSQSILVSGESGAGKTETTKFLLQYFAAMGNMIKESTSSSSINGINTSSDGIPVTPPPSPMKKSPVDKSVEERVLESTPLLEAFGNAKTLRNDNSSRFGKFIEIHFNEMGSIIGAKILTYLLEKSRIVRQVYNERNYHIFYQLLSGASEELKEKLNLKTIEEYSYLNKSGCFEIEGVSDEEHFNKTCHAMQVAGITLVEQENVFRILSAILLIGNFEFENIAGSNDDSCQLIDRDPLEKVSVLLGCAQPDELLNSMLTRKVVTGKESYISHNTKERAENARDSLSMFLYGMMFDWLVVKINSSMSISTQQKSKSFIGVLDIYGFESFEVNGFEQFCINYANEKLQQLFNQHVFKEEQQEYIKEKIDWSYIDFNDNQDTLDLIEKKPICILTLLDEETMFPKATPQTLATKLYSKMTSHSKFEKPRFSSTAFTINHYAGKVTYETDQFLDKNKDFIIPEQISILQRSNFSFIKVLMSHSDKFTQSPGGHPQGNGGPTSSNTKGTSGSSSMKFLSVGSQFSTSLATLMKTISTTTPHYVRCIKPNPEKLPQTFNKQDVIHQLRCGGVMESVRICCAGFPTRRLLSEFYQRYKILYVKDINTGSGGGKKGSNNNKIKDPKILVQNLLTGIELSDDKYKIGLTKVFLRAGQLASLEDMRLEQLDRSATVIQKRWKGYLYRKRYKQLRDASLIIQTKLRSVHAKQQLSALQRTHSAILIQKVWRAHRDRVQYQKIRDASLQLQTVMRRHLFSEQVHRERCENAAIILQTKIRQILSKREVDKKLRGIILIQARWRMKLAKRVYIQLRAEARSLRTVQEQKNKLQEKLEELQWRLTSEAKRKQQLEDQKVKSDTTISELSSNNDHLELQLSEIQLKYQELDKSNQSSQLQLSECLSKLEEQTQQLDHSSKLNKKLEKDLSDQHDSIEKLQSQFNETEQQLQQFKQQSEELSSKLSKTTQQLDFNKQEFDRLSQERDTDNTNNQLEIQQLKKANSTLEEDYFSLSGIRDNLERQVLELRDENQLIKERLDSLGQQSSQFQSGAALEKQQLEQLVQEQSEQLIKLSSEKLGSEEEAKKQINQLELELTDHKSKLQIQLQLTEQSNEKIKKLKGKLEEYQDEKKQLQQELERIKQSKQSVEDEKNSLITQLTTVKFESTQVSTNVSHQKEKITTLKSTIEELNKSIGKLQAEQKNKDDEIRKIQFELNDQKQQFTRQTKEFSDLQSQQSIDRQKSEITIHSLERTNETLKSDFERVQQSLKQQERDCQQYKDTINRLENEVKQLTQLKERFENEFFVAKEQNSNQTQESVYLKEVTTQMQQNQSRIERELEEKKQHITRIDDERDELKKQLTQLQQQHEQSSTQLLLAQNELERLRKKELKYKERGHETSKQQDQFNMEIQSLRITNNDQLKSLQDYEQEKKKLKDKLSSSKQEAQQQRESIIKMDAELSAIKQHSQWVENSFTDMKQRNQELIESSALYKQQLLQQTSTIDSTIKEKENEISKLQQQLETSNQQLHQLKEELNSMKQSNQLESTEQSKQLNQLIQENQQLKSVTNEISKQLDDAVFENQKINNTIKEQEIKSKRMSVELQQHIDEGKQQEIQQLQSTIAQLKQQQQSETDRLEKEIQQMKRERETQMKLVESTKLNYHMLEDRMELYRNVMEIIDYKETEWEKLARLAGCKELDTKLLSDFLLSCKLEHTSLGSQMWFHQIDYWCPYERDSSKGIFYGIIRSIVDFTIKNFDDVDLLSYLLACCSLTLFLYKKNLVKHLNGANSIMPIIPTLGDLEELNERLSHQSLTTSGKFSGGGGGGGIDFIDQLQQSTGITFGLIFKATTLKLSPLVDGAILNENYNKKLTSISASSFGSGSFGLGSNGVGSVLSIELITTYLSSIITIFQHRMVHFTLSQRFFNQVFCWIGALIMKGFMLRQTFCTETFATFVKTKIDFLTRWADDIGNVWVGDVANAFQQVREVINVLNIKDKEKIIDDKIRKQYCPTLNSNQLKQVLSLFSPGEFGGKRVSAKVIASICPPNKSSAGQSFVQDENKLNTIPIDSLHYLEIQDIKTLSLPLSIRQTIETEIINLKQQIACKK.

Residues 25-77 (QEGAGVWIPDQELGWIGADVIEHSETSADQVLVRTEDDREVKIPLSKVFQKNP) form the Myosin N-terminal SH3-like domain. Positions 81 to 821 (EGVDDLSFLS…QLASLEDMRL (741 aa)) constitute a Myosin motor domain. 174–181 (GESGAGKT) provides a ligand contact to ATP. Residues 646-672 (FTQSPGGHPQGNGGPTSSNTKGTSGSS) form a disordered region. Low complexity predominate over residues 660–672 (PTSSNTKGTSGSS). The tract at residues 669-749 (SGSSSMKFLS…GFPTRRLLSE (81 aa)) is actin-binding. IQ domains are found at residues 824-851 (LDRS…RDAS), 872-901 (RTHS…ASLQ), and 943-972 (KLRG…EARS). A coiled-coil region spans residues 973–1812 (LRTVQEQKNK…NYHMLEDRME (840 aa)). The tract at residues 1504–1524 (KKQLTQLQQQHEQSSTQLLLA) is disordered. Residues 1506 to 1523 (QLTQLQQQHEQSSTQLLL) are compositionally biased toward low complexity. The Dilute domain occupies 1969–2188 (IDFIDQLQQS…IASICPPNKS (220 aa)).

Belongs to the TRAFAC class myosin-kinesin ATPase superfamily. Myosin family. As to quaternary structure, homodimer that associates with six light chains.

The protein resides in the contractile vacuole. Its function is as follows. Processive motor protein that can move over long distances along F-actin without disassociating; processiveness depends on high physiological Mg(2+) concentrations. Presents a high actin affinity in the presence of ADP, fast ATP hydrolysis, and a high steady-state ATPase activity in the presence of actin that is rate limited by ADP release. Physiological decrease of free Mg(2+) ions leads to an increased rate of ADP release and shortening of the fraction of time it spends in the strong acting binding states. The protein is Myosin-J heavy chain (myoJ) of Dictyostelium discoideum (Social amoeba).